A 1574-amino-acid chain; its full sequence is Myosin-2 (1574 aa).

Serine 2 bears the N-acetylserine mark. Residues 4-57 enclose the Myosin N-terminal SH3-like domain; that stretch reads EVGTRCWYPHKELGWIGAEVIKNEFNDGKYHLELQLEDDEIVSVDTKDLNNDKD. The region spanning 70 to 781 is the Myosin motor domain; sequence EATEDLTSLS…MLAYLEKLRS (712 aa). 164–171 contacts ATP; it reads GESGAGKT. The tract at residues 443 to 523 is actin-binding; sequence FIGVLDIYGF…LGILSLLDEE (81 aa). 6 IQ domains span residues 784 to 806, 807 to 831, 832 to 855, 856 to 879, 880 to 902, and 903 to 932; these read MHNS…QYLQ, ISQA…NDEM, KVNC…VFSV, LRTI…KQEH, EYNA…RFLR, and TKKD…DAKS. Positions 933 to 1088 form a coiled coil; sequence VNHLKEVSYK…RLQTAMSLGT (156 aa). The segment at 1087-1574 is non alpha-helical, tail domain; that stretch reads GTVTTSVLPQ…VAQQVVQDGH (488 aa). Position 1097 is a phosphothreonine (threonine 1097). At serine 1121 the chain carries Phosphoserine. Residues 1226–1501 form the Dilute domain; that stretch reads AQVLTTIQKV…LRYVADIVKK (276 aa).

This sequence belongs to the TRAFAC class myosin-kinesin ATPase superfamily. Myosin family. Homodimer. Interacts with calmodulin (CMD1) and the myosin light chain MLC1 through its IQ repeats. Binds to the membrane receptors SEC4 and VAC17 to transport secretory vesicles and the vacuole, respectively. Binds to KAR9, which transports BIM1-coated cytoplasmic microtubules that are attached to the spindle pole body into the emerging bud, thereby correctly orienting the mitotic spindle. Interacts with YPT11 and MMR1 to accelerate mitochondrial distribution to the bud. Interacts with SHE4 and localizes it to the bud tip. Interacts with RHO3 and SMY1, putative regulators of MYO2 function. Interacts with SRO7.

It is found in the bud neck. The protein localises to the bud tip. Its function is as follows. Myosin heavy chain that is required for the cell cycle-regulated transport of various organelles and proteins for their segregation. Functions by binding with its tail domain to receptor proteins on organelles and exerting force with its N-terminal motor domain against actin filaments, thereby transporting its cargo along polarized actin cables. Essential for the delivery of secretory vesicles to sites of active growth during bud emergence and cytokinesis. Required for segregation and inheritance of peroxisomes, late Golgi compartments, mitochondria and the vacuole to the daughter cell during cell division. Also required for correct alignment of the spindle during mitosis. The polypeptide is Myosin-2 (MYO2) (Saccharomyces cerevisiae (strain ATCC 204508 / S288c) (Baker's yeast)).